The primary structure comprises 890 residues: MSRSAALLLCLLGCHVWKAVTKTLREPGAGAQEVTLKVHISDASTHQPVADALIEIFTNQASIASGTSGTDGVAFIKFQYKLGSQLIVTASKHAYVPNSAPWKPIRLPVFSSLSLGLLPERSATLMVYEDVVQIVSGFQGARPQPRVHFQRRALRLPENTSYSDLTAFLTAASSPSEVDSFPYLRGLDGNGTGNSTRHDLTPVTAVSVHLLSSNGTPVLVDGPIYVTVPLATQSSLRHNAYVTAWRFDQKLGTWLKSGLGLVHQEGSQLTWTYIAPQLGYWVAAMSPPIPGPVVTQDITTYHTVFLLAILGGMAFILLVLLCLLLYYCRRKCMKPRQHHRKLQLPAGLESSKRDQSTSMSHINLLFSRRASEFPGPLSVTSHGRPEAPGTKELMSGVHLEMMSPGGEGDLHTPMLKLSYSTSQEFSSREELLSCKEEDKSQISFDNLTPSGTLRKDYHKSVEVFPLKARKSMEREGYESSGNDDYRGSYNTVLSQPLFEKQDREGPASTGSKLTIQEHLYPAPSSPEKEQLLDRRPTECMMSRSVDHLERPTSFPQPGQLICCSSVDQVNDSVYRKVLPALVIPAHYMKLPGDHSYVSQPLVVPADQQLEIERLQAELSNPHAGIFPHPSSQIQPQPLSSQAISQQHLQDAGTREWSPQNASMSESLSIPASLNDAALAQMNSEVQLLTEKALMELGGGKPLPHPRAWFVSLDGRSNAHVRHSYIDLQRAGRNGSNDASLDSGVDMNEPKSARKGRGDALSLQQNYPPVQEHQQKEPRAPDSTAYTQLVYLDDVEQSGSECGTTVCTPEDSALRCLLEGSSRRSGGQLPSLQEETTRRTADAPSEPAVSPHQRRSAHEEEEDDDDDDQGEDKKSPWQKREERPLMAFNIK.

The signal sequence occupies residues 1–21 (MSRSAALLLCLLGCHVWKAVT). Over 22 to 303 (KTLREPGAGA…VTQDITTYHT (282 aa)) the chain is Extracellular. 2 N-linked (GlcNAc...) asparagine glycosylation sites follow: asparagine 190 and asparagine 194. Residues 304-324 (VFLLAILGGMAFILLVLLCLL) traverse the membrane as a helical segment. At 325-890 (LYYCRRKCMK…ERPLMAFNIK (566 aa)) the chain is on the cytoplasmic side. Phosphoserine occurs at positions 358, 360, 371, 422, 443, and 525. Disordered stretches follow at residues 730–759 (AGRN…RGDA) and 818–890 (EGSS…FNIK). Residues 747 to 757 (NEPKSARKGRG) show a composition bias toward basic and acidic residues. The span at 822-833 (RRSGGQLPSLQE) shows a compositional bias: polar residues. Phosphoserine is present on residues serine 849 and serine 855. The span at 858 to 869 (EEEEDDDDDDQG) shows a compositional bias: acidic residues. Positions 870–883 (EDKKSPWQKREERP) are enriched in basic and acidic residues.

It belongs to the FAM171 family. Interacts with ADAM10, NSG1 and OAZ1.

The protein resides in the cell membrane. In terms of biological role, involved in the regulation of the cytoskeletal dynamics, plays a role in actin stress fiber formation. This chain is Protein FAM171A1 (FAM171A1), found in Pongo abelii (Sumatran orangutan).